Here is a 326-residue protein sequence, read N- to C-terminus: Beta-ketoacyl-[acyl-carrier-protein] synthase III (326 aa).

Residues Cys-120 and His-253 contribute to the active site. The tract at residues 254 to 258 is ACP-binding; the sequence is QANIR. The active site involves Asn-283.

Belongs to the thiolase-like superfamily. FabH family. In terms of assembly, homodimer.

It is found in the cytoplasm. The enzyme catalyses malonyl-[ACP] + acetyl-CoA + H(+) = 3-oxobutanoyl-[ACP] + CO2 + CoA. It functions in the pathway lipid metabolism; fatty acid biosynthesis. Functionally, catalyzes the condensation reaction of fatty acid synthesis by the addition to an acyl acceptor of two carbons from malonyl-ACP. Catalyzes the first condensation reaction which initiates fatty acid synthesis and may therefore play a role in governing the total rate of fatty acid production. Possesses both acetoacetyl-ACP synthase and acetyl transacylase activities. Its substrate specificity determines the biosynthesis of branched-chain and/or straight-chain of fatty acids. The chain is Beta-ketoacyl-[acyl-carrier-protein] synthase III from Ralstonia nicotianae (strain ATCC BAA-1114 / GMI1000) (Ralstonia solanacearum).